The sequence spans 564 residues: Dihydroxy-acid dehydratase (564 aa).

The segment covering 1–10 has biased composition (basic residues); it reads MTDTRTKRRM. The tract at residues 1–23 is disordered; the sequence is MTDTRTKRRMNWNSHHITQGDER. Position 57 (C57) interacts with [2Fe-2S] cluster. D89 contacts Mg(2+). C130 serves as a coordination point for [2Fe-2S] cluster. 2 residues coordinate Mg(2+): D131 and K132. K132 is modified (N6-carboxylysine). C202 is a [2Fe-2S] cluster binding site. A Mg(2+)-binding site is contributed by E454. Residue S480 is the Proton acceptor of the active site.

It belongs to the IlvD/Edd family. In terms of assembly, homodimer. Requires [2Fe-2S] cluster as cofactor. Mg(2+) is required as a cofactor.

The catalysed reaction is (2R)-2,3-dihydroxy-3-methylbutanoate = 3-methyl-2-oxobutanoate + H2O. The enzyme catalyses (2R,3R)-2,3-dihydroxy-3-methylpentanoate = (S)-3-methyl-2-oxopentanoate + H2O. It functions in the pathway amino-acid biosynthesis; L-isoleucine biosynthesis; L-isoleucine from 2-oxobutanoate: step 3/4. The protein operates within amino-acid biosynthesis; L-valine biosynthesis; L-valine from pyruvate: step 3/4. In terms of biological role, functions in the biosynthesis of branched-chain amino acids. Catalyzes the dehydration of (2R,3R)-2,3-dihydroxy-3-methylpentanoate (2,3-dihydroxy-3-methylvalerate) into 2-oxo-3-methylpentanoate (2-oxo-3-methylvalerate) and of (2R)-2,3-dihydroxy-3-methylbutanoate (2,3-dihydroxyisovalerate) into 2-oxo-3-methylbutanoate (2-oxoisovalerate), the penultimate precursor to L-isoleucine and L-valine, respectively. This is Dihydroxy-acid dehydratase from Deinococcus geothermalis (strain DSM 11300 / CIP 105573 / AG-3a).